A 248-amino-acid polypeptide reads, in one-letter code: tRNA N(3)-methylcytidine methyltransferase trm141 (248 aa).

Tryptophan 23, tyrosine 27, glycine 63, aspartate 86, aspartate 112, and isoleucine 133 together coordinate S-adenosyl-L-methionine.

Belongs to the methyltransferase superfamily. METL family.

The protein localises to the cytoplasm. It localises to the nucleus. The catalysed reaction is cytidine(32) in tRNA(Ser) + S-adenosyl-L-methionine = N(3)-methylcytidine(32) in tRNA(Ser) + S-adenosyl-L-homocysteine + H(+). Its function is as follows. S-adenosyl-L-methionine-dependent methyltransferase that mediates N(3)-methylcytidine modification of residue 32 of the tRNA anticodon loop of tRNA(Ser). N(3)-methylcytidine methylation by trm141 requires the formation of N(6)-dimethylallyladenosine(37) (i6A37) by tit1 as prerequisite. Does not catalyze N(3)-methylcytidine modification of tRNA(Thr). The protein is tRNA N(3)-methylcytidine methyltransferase trm141 of Schizosaccharomyces pombe (strain 972 / ATCC 24843) (Fission yeast).